A 227-amino-acid chain; its full sequence is MAYPFELGFQDATSPIMEELLHFHDHTLMIVFLISSLVLYIISLMLTTKLTHTSTMDAQEVETIWTILPAIILILIALPSLRILYMMDEINDPSLTVKTMGHQWYWSYEYTDYEDLNFDSYMIPTSDLSPGELRLLEVDNRVVLPMELPIRMLISSEDVLHSWAVPSLGLKTDAIPGRLNQATLTSTRPGLYYGQCSEICGSNHSFMPIVLELVPLKHFENWSSSML.

Topologically, residues 1 to 14 are mitochondrial intermembrane; it reads MAYPFELGFQDATS. A helical transmembrane segment spans residues 15 to 45; it reads PIMEELLHFHDHTLMIVFLISSLVLYIISLM. Residues 46 to 59 lie on the Mitochondrial matrix side of the membrane; the sequence is LTTKLTHTSTMDAQ. Residues 60 to 87 form a helical membrane-spanning segment; it reads EVETIWTILPAIILILIALPSLRILYMM. Over 88-227 the chain is Mitochondrial intermembrane; it reads DEINDPSLTV…HFENWSSSML (140 aa). The Cu cation site is built by histidine 161, cysteine 196, glutamate 198, cysteine 200, histidine 204, and methionine 207. Residue glutamate 198 participates in Mg(2+) binding.

Belongs to the cytochrome c oxidase subunit 2 family. In terms of assembly, component of the cytochrome c oxidase (complex IV, CIV), a multisubunit enzyme composed of 14 subunits. The complex is composed of a catalytic core of 3 subunits MT-CO1, MT-CO2 and MT-CO3, encoded in the mitochondrial DNA, and 11 supernumerary subunits COX4I, COX5A, COX5B, COX6A, COX6B, COX6C, COX7A, COX7B, COX7C, COX8 and NDUFA4, which are encoded in the nuclear genome. The complex exists as a monomer or a dimer and forms supercomplexes (SCs) in the inner mitochondrial membrane with NADH-ubiquinone oxidoreductase (complex I, CI) and ubiquinol-cytochrome c oxidoreductase (cytochrome b-c1 complex, complex III, CIII), resulting in different assemblies (supercomplex SCI(1)III(2)IV(1) and megacomplex MCI(2)III(2)IV(2)). Found in a complex with TMEM177, COA6, COX18, COX20, SCO1 and SCO2. Interacts with TMEM177 in a COX20-dependent manner. Interacts with COX20. Interacts with COX16. The cofactor is Cu cation.

Its subcellular location is the mitochondrion inner membrane. It carries out the reaction 4 Fe(II)-[cytochrome c] + O2 + 8 H(+)(in) = 4 Fe(III)-[cytochrome c] + 2 H2O + 4 H(+)(out). Component of the cytochrome c oxidase, the last enzyme in the mitochondrial electron transport chain which drives oxidative phosphorylation. The respiratory chain contains 3 multisubunit complexes succinate dehydrogenase (complex II, CII), ubiquinol-cytochrome c oxidoreductase (cytochrome b-c1 complex, complex III, CIII) and cytochrome c oxidase (complex IV, CIV), that cooperate to transfer electrons derived from NADH and succinate to molecular oxygen, creating an electrochemical gradient over the inner membrane that drives transmembrane transport and the ATP synthase. Cytochrome c oxidase is the component of the respiratory chain that catalyzes the reduction of oxygen to water. Electrons originating from reduced cytochrome c in the intermembrane space (IMS) are transferred via the dinuclear copper A center (CU(A)) of subunit 2 and heme A of subunit 1 to the active site in subunit 1, a binuclear center (BNC) formed by heme A3 and copper B (CU(B)). The BNC reduces molecular oxygen to 2 water molecules using 4 electrons from cytochrome c in the IMS and 4 protons from the mitochondrial matrix. This is Cytochrome c oxidase subunit 2 (MT-CO2) from Tamias amoenus (Yellow-pine chipmunk).